We begin with the raw amino-acid sequence, 397 residues long: Keratinocyte differentiation factor 1 (397 aa).

Over residues 1–16 (MPRPGQPRPSSGPPRL) the composition is skewed to pro residues. Disordered regions lie at residues 1-67 (MPRP…SAEP), 124-158 (EAAW…MGSS), and 191-214 (PLAD…RGSE). The span at 44-55 (RPDPKDPGHHGP) shows a compositional bias: basic and acidic residues. Positions 201–211 (SLPSTFTSSPR) are enriched in polar residues. S218 carries the post-translational modification Phosphoserine. Disordered stretches follow at residues 304 to 339 (ISTR…TMVG) and 361 to 392 (ARKL…GAPL). A compositionally biased stretch (low complexity) spans 321 to 330 (ARSTAPAAAP). The span at 375–388 (SQDSSFQGTDTDSS) shows a compositional bias: polar residues.

It localises to the cytoplasm. Its subcellular location is the cell junction. Plays a role in the regulation of the epidermis formation during early development. Required both as an inhibitor of basal cell proliferation and a promoter of differentiation of basal progenitor cell progeny. The chain is Keratinocyte differentiation factor 1 (Kdf1) from Rattus norvegicus (Rat).